A 655-amino-acid chain; its full sequence is Forkhead box protein O1 (655 aa).

2 disordered regions span residues 1–63 (MAEA…SASA) and 116–158 (GCLH…SRRN). Thr24 bears the Phosphothreonine; by PKB/AKT1 or PKB/AKT2 and SGK1 mark. Over residues 33-63 (SQSNSATSSPAPSGSAAANPDAAAGLPSASA) the composition is skewed to low complexity. A compositionally biased stretch (pro residues) spans 120 to 141 (PAPPQPPPPGPLSQHPPVPPAA). A DNA-binding region (fork-head) is located at residues 159-235 (AWGNLSYADL…VQNEGTGKSS (77 aa)). 2 DNA-binding regions span residues 211–218 (NSIRHNLS) and 234–237 (SSWW). Residues Ser212, Ser218, Ser234, and Ser235 each carry the phosphoserine; by STK4/MST1 modification. The segment at 234–344 (SSWWMLNPEG…QDDLGEGDVH (111 aa)) is disordered. Lys245 and Lys248 each carry N6-acetyllysine. A Phosphoserine; by CDK1 modification is found at Ser249. An omega-N-methylarginine; by PRMT1 mark is found at Arg251 and Arg253. A Nuclear localization signal motif is present at residues 251 to 253 (RRR). Residue Ser256 is modified to Phosphoserine; by PKB/AKT1 and SGK1. Residues Lys262, Lys265, and Lys274 each carry the N6-acetyllysine modification. Residues 264–275 (AKSRSRAAKKKA) are compositionally biased toward basic residues. The sufficient for interaction with NLK stretch occupies residues 283–563 (GAGDSPGSQF…RLTQVKTPVQ (281 aa)). Phosphoserine occurs at positions 287 and 298. Over residues 309–326 (NWSTFRPRTSSNASTISG) the composition is skewed to polar residues. Ser319 carries the post-translational modification Phosphoserine; by PKB/AKT1. Residue Ser322 is modified to Phosphoserine; by CK1 and SGK1. Position 325 is a phosphoserine; by CK1 (Ser325). Position 329 is a phosphoserine; by DYRK1A (Ser329). At Thr333 the chain carries Phosphothreonine. The segment at 363-459 (SEISNPENME…GGMSQYNCAP (97 aa)) is required for interaction with RUNX2. At Lys423 the chain carries N6-acetyllysine. Positions 462 to 466 (LKELL) match the Required for interaction with SIRT1 motif. Residues 507–534 (YGSQASHNKMMNPSSHTHPGHAQQTSAV) are compositionally biased toward polar residues. A disordered region spans residues 507–537 (YGSQASHNKMMNPSSHTHPGHAQQTSAVNGR).

Interacts with LRPPRC. Interacts with RUNX2; the interaction inhibits RUNX2 transcriptional activity and mediates the IGF1/insulin-dependent BGLAP expression in osteoblasts Interacts with PPP2R1A; the interaction regulates the dephosphorylation of FOXO1 at Thr-24 and Ser-256 leading to its nuclear import. Interacts (acetylated form) with PPARG. Interacts with XBP1 isoform 2; this interaction is direct and leads to FOXO1 ubiquitination and degradation via the proteasome pathway. Interacts with NLK. Interacts with SIRT1; the interaction results in the deacetylation of FOXO1 leading to activation of FOXO1-mediated transcription of genes involved in DNA repair and stress resistance. Binds to CDK1. Interacts with the 14-3-3 proteins, YWHAG and YWHAZ; the interactions require insulin-stimulated phosphorylation on Thr-24, promote nuclear exit and loss of transcriptional activity. Interacts with SKP2; the interaction ubiquitinates FOXO1 leading to its proteasomal degradation. The interaction requires the presence of KRIT1. Interacts (via the C-terminal half) with ATF4 (via its DNA-binding domain); the interaction occurs in osteoblasts, regulates glucose homeostasis via suppression of beta-cell proliferation and subsequent decrease in insulin production. Interacts with PRMT1; the interaction methylates FOXO1, prevents PKB/AKT1 phosphorylation and retains FOXO1 in the nucleus. Interacts with EP300 and CREBBP; the interactions acetylate FOXO1. Interacts with SIRT2; the interaction is disrupted in response to oxidative stress or serum deprivation, leading to increased level of acetylated FOXO1, which promotes stress-induced autophagy by stimulating E1-like activating enzyme ATG7. Interacts (acetylated form) with ATG7; the interaction is increased in response to oxidative stress or serum deprivation and promotes the autophagic process leading to cell death. Interacts (via the Fork-head domain) with CEBPA; the interaction increases when FOXO1 is deacetylated. Interacts with WDFY2. Forms a complex with WDFY2 and AKT1. Interacts with CRY1. Interacts with PPIA/CYPA; the interaction promotes FOXO1 dephosphorylation, nuclear accumulation and transcriptional activity. Interacts with TOX4; FOXO1 is required for full induction of TOX4-dependent activity and the interaction is inhibited by insulin. Interacts (when phosphorylated on Ser-256) with STUB1/CHIP. Post-translationally, phosphorylation by NLK promotes nuclear export and inhibits the transcriptional activity. In response to growth factors, phosphorylation on Thr-24, Ser-256 and Ser-322 by PKB/AKT1 promotes nuclear export and inactivation of transactivational activity. Phosphorylation on Thr-24 is required for binding 14-3-3 proteins. Phosphorylation of Ser-256 decreases DNA-binding activity and promotes the phosphorylation of Thr-24 and Ser-319, permitting phosphorylation of Ser-322 and Ser-325, probably by CDK1, leading to nuclear exclusion and loss of function. Stress signals, such as response to oxygen or nitric oxide, attenuate the PKB/AKT1-mediated phosphorylation leading to nuclear retention. Phosphorylation of Ser-329 is independent of IGF1 and leads to reduced function. Dephosphorylated on Thr-24 and Ser-256 by PP2A in beta-cells under oxidative stress leading to nuclear retention. Phosphorylation of Ser-249 by CDK1 disrupts binding of 14-3-3 proteins leading to nuclear accumulation and has no effect on DNA-binding nor transcriptional activity. Phosphorylation by STK4/MST1 on Ser-212, upon oxidative stress, inhibits binding to 14-3-3 proteins and nuclear export. PPIA/CYPA promotes its dephosphorylation on Ser-256. In terms of processing, ubiquitinated by SKP2. Ubiquitination leads to proteasomal degradation. Ubiquitinated by STUB1/CHIP; when Ser-256 is phosphorylated. Methylation inhibits AKT1-mediated phosphorylation at Ser-256 and is increased by oxidative stress. Post-translationally, acetylated. Acetylation at Lys-262, Lys-265 and Lys-274 are necessary for autophagic cell death induction. Deacetylated by SIRT2 in response to oxidative stress or serum deprivation, thereby negatively regulating FOXO1-mediated autophagic cell death. Once in the nucleus, acetylated by CREBBP/EP300. Acetylation diminishes the interaction with target DNA and attenuates the transcriptional activity. It increases the phosphorylation at Ser-256. Deacetylation by SIRT1 results in reactivation of the transcriptional activity. Oxidative stress by hydrogen peroxide treatment appears to promote deacetylation and uncoupling of insulin-induced phosphorylation. By contrast, resveratrol acts independently of acetylation. Acetylated at Lys-423, promoting its localization to the nucleus and transcription factor activity. Deacetylation at Lys-423 by SIRT6, promotes its translocation into the cytoplasm, preventing its transcription factor activity. Deacetylation and subsequent inhibition by SIRT6 has different effects depending on cell types: it inhibits gluconeogenesis in hepatocytes, promotes glucose sensing in pancreatic beta-cells and regulates lipid catabolism in brown adipocytes. As to expression, expressed in umbilical endothelial cells (at protein level). Abundantly expressed in skeletal muscle and ovary, with lower expression in the heart, placenta, lung, liver, pancreas, spleen, testis and small intestine. Weakly expressed in the brain, thymus, prostate and mucosal lining of the colon.

The protein resides in the cytoplasm. Its subcellular location is the nucleus. Transcription factor that is the main target of insulin signaling and regulates metabolic homeostasis in response to oxidative stress. Binds to the insulin response element (IRE) with consensus sequence 5'-TT[G/A]TTTTG-3' and the related Daf-16 family binding element (DBE) with consensus sequence 5'-TT[G/A]TTTAC-3'. Activity suppressed by insulin. Main regulator of redox balance and osteoblast numbers and controls bone mass. Orchestrates the endocrine function of the skeleton in regulating glucose metabolism. Also acts as a key regulator of chondrogenic commitment of skeletal progenitor cells in response to lipid availability: when lipids levels are low, translocates to the nucleus and promotes expression of SOX9, which induces chondrogenic commitment and suppresses fatty acid oxidation. Acts synergistically with ATF4 to suppress osteocalcin/BGLAP activity, increasing glucose levels and triggering glucose intolerance and insulin insensitivity. Also suppresses the transcriptional activity of RUNX2, an upstream activator of osteocalcin/BGLAP. Acts as an inhibitor of glucose sensing in pancreatic beta cells by acting as a transcription repressor and suppressing expression of PDX1. In hepatocytes, promotes gluconeogenesis by acting together with PPARGC1A and CEBPA to activate the expression of genes such as IGFBP1, G6PC1 and PCK1. Also promotes gluconeogenesis by directly promoting expression of PPARGC1A and G6PC1. Important regulator of cell death acting downstream of CDK1, PKB/AKT1 and STK4/MST1. Promotes neural cell death. Mediates insulin action on adipose tissue. Regulates the expression of adipogenic genes such as PPARG during preadipocyte differentiation and, adipocyte size and adipose tissue-specific gene expression in response to excessive calorie intake. Regulates the transcriptional activity of GADD45A and repair of nitric oxide-damaged DNA in beta-cells. Required for the autophagic cell death induction in response to starvation or oxidative stress in a transcription-independent manner. Mediates the function of MLIP in cardiomyocytes hypertrophy and cardiac remodeling. Positive regulator of apoptosis in cardiac smooth muscle cells as a result of its transcriptional activation of pro-apoptotic genes. Regulates endothelial cell (EC) viability and apoptosis in a PPIA/CYPA-dependent manner via transcription of CCL2 and BCL2L11 which are involved in EC chemotaxis and apoptosis. The polypeptide is Forkhead box protein O1 (Homo sapiens (Human)).